We begin with the raw amino-acid sequence, 278 residues long: Imidazole glycerol phosphate synthase subunit HisF (278 aa).

Active-site residues include Asp11 and Asp130.

The protein belongs to the HisA/HisF family. Heterodimer of HisH and HisF.

It is found in the cytoplasm. It carries out the reaction 5-[(5-phospho-1-deoxy-D-ribulos-1-ylimino)methylamino]-1-(5-phospho-beta-D-ribosyl)imidazole-4-carboxamide + L-glutamine = D-erythro-1-(imidazol-4-yl)glycerol 3-phosphate + 5-amino-1-(5-phospho-beta-D-ribosyl)imidazole-4-carboxamide + L-glutamate + H(+). The protein operates within amino-acid biosynthesis; L-histidine biosynthesis; L-histidine from 5-phospho-alpha-D-ribose 1-diphosphate: step 5/9. In terms of biological role, IGPS catalyzes the conversion of PRFAR and glutamine to IGP, AICAR and glutamate. The HisF subunit catalyzes the cyclization activity that produces IGP and AICAR from PRFAR using the ammonia provided by the HisH subunit. This chain is Imidazole glycerol phosphate synthase subunit HisF, found in Thermodesulfovibrio yellowstonii (strain ATCC 51303 / DSM 11347 / YP87).